The following is a 471-amino-acid chain: Sestrin-2 (471 aa).

An N-acetylmethionine modification is found at methionine 1. The N-terminal domain; mediates the alkylhydroperoxide reductase activity stretch occupies residues 57 to 230 (GLEALMSSGR…APSPPSEQST (174 aa)). Cysteine 116 (cysteine sulfenic acid (-SOH) intermediate) is an active-site residue. A Glycyl lysine isopeptide (Lys-Gly) (interchain with G-Cter in ubiquitin) cross-link involves residue lysine 166. A disordered region spans residues 212–241 (DPEGSPAPQAPSPPSEQSTPPSRDSLNHSG). Residue serine 240 is modified to Phosphoserine. The tract at residues 299–471 (ANPDMLCFVE…ALRAITRYMT (173 aa)) is C-terminal domain; mediates TORC1 regulation. L-leucine is bound by residues 365–368 (TYNT), threonine 377, and glutamate 442.

This sequence belongs to the sestrin family. In terms of assembly, interacts with the GATOR2 complex which is composed of MIOS, SEC13, SEH1L, WDR24 and WDR59; the interaction is negatively regulated by leucine. Conveys leucine availability via direct interaction with SEH1L and WDR24 components of the GATOR2 complex. Interacts with RRAGA, RRAGB, RRAGC and RRAGD; may function as a guanine nucleotide dissociation inhibitor for RRAGs and regulate them. May interact with the TORC2 complex. Interacts with KEAP1, RBX1, SQSTM and ULK1; to regulate the degradation of KEAP1. May also associate with the complex composed of TSC1, TSC2 and the AMP-responsive protein kinase/AMPK to regulate TORC1 signaling. May interact with PRDX1. Post-translationally, phosphorylated by ULK1 at multiple sites. In terms of processing, ubiquitinated at Lys-166 by RNF167 via 'Lys-63'-linked polyubiquitination in response to leucine deprivation: ubiquitination promotes SESN2-interaction with the GATOR2 complex, leading to inhibit the TORC1 signaling pathway. Deubiquitinated at Lys-166 by STAMBPL1, promoting the TORC1 signaling pathway. Ubiquitinated by RNF186; ubiquitination mediates proteasomal degradation.

Its subcellular location is the cytoplasm. It catalyses the reaction a hydroperoxide + L-cysteinyl-[protein] = S-hydroxy-L-cysteinyl-[protein] + an alcohol. Functions as an intracellular leucine sensor that negatively regulates the mTORC1 signaling pathway through the GATOR complex. In absence of leucine, binds the GATOR subcomplex GATOR2 and prevents mTORC1 signaling. Binding of leucine to SESN2 disrupts its interaction with GATOR2 thereby activating the TORC1 signaling pathway. This stress-inducible metabolic regulator also plays a role in protection against oxidative and genotoxic stresses. May negatively regulate protein translation in response to endoplasmic reticulum stress, via mTORC1. May positively regulate the transcription by NFE2L2 of genes involved in the response to oxidative stress by facilitating the SQSTM1-mediated autophagic degradation of KEAP1. May also mediate TP53 inhibition of TORC1 signaling upon genotoxic stress. Moreover, may prevent the accumulation of reactive oxygen species (ROS) through the alkylhydroperoxide reductase activity born by the N-terminal domain of the protein. Was originally reported to contribute to oxidative stress resistance by reducing PRDX1. However, this could not be confirmed. This is Sestrin-2 from Bos taurus (Bovine).